A 75-amino-acid chain; its full sequence is MGSIRPFNVKRTAEEIAEKYPSLFTEKFEENKRKLEKMMPDVSKRTINIISGYLTRYVVKKKEKAEREIEENAAS.

The protein belongs to the eukaryotic ribosomal protein eS17 family.

The chain is Small ribosomal subunit protein eS17 from Thermoplasma volcanium (strain ATCC 51530 / DSM 4299 / JCM 9571 / NBRC 15438 / GSS1).